The sequence spans 323 residues: Mas-related G-protein coupled receptor member B4 (323 aa).

Residues 1-34 (MSPTTQAWSINNTVVKENYYTEILSCITTFNTLN) are Extracellular-facing. N-linked (GlcNAc...) asparagine glycosylation is present at N11. Residues 35–55 (FLIVIISVVGMAGNATVLWLL) traverse the membrane as a helical segment. The Cytoplasmic segment spans residues 56 to 63 (GFHMHRNA). Residues 64 to 84 (FSVYVLNLAGADFLYLCAQTV) form a helical membrane-spanning segment. Residues 85 to 98 (YSLECVLQFDNSYF) lie on the Extracellular side of the membrane. Residues 99 to 119 (YFLLTILMFNYLAGFCMIAAI) form a helical membrane-spanning segment. The Cytoplasmic portion of the chain corresponds to 120–147 (STERCLSVTWPIWYHCQRPRHTSATVCA). Residues 148-168 (LFWAFSLLLSLLLGQGCGFLF) form a helical membrane-spanning segment. The Extracellular portion of the chain corresponds to 169 to 180 (SKFDYSFCRYCN). A helical membrane pass occupies residues 181-201 (FIATAFLIVIFMVLFVSSLAL). Topologically, residues 202-224 (LAKIICGSHRIPVTRFYVTIALT) are cytoplasmic. A helical transmembrane segment spans residues 225-245 (VLVFIFFGLPIGICVFLLPWI). The Extracellular segment spans residues 246–255 (HMMLSSFFYE). Residues 256-276 (MVTLLSCVNSCANPIIYFFVG) form a helical membrane-spanning segment. Residues 277 to 323 (SIRHHRLQRQTLKLLLQRAMQDTPEEEGGERGPSQKSEDLEVVRCSS) lie on the Cytoplasmic side of the membrane. The interval 298–323 (DTPEEEGGERGPSQKSEDLEVVRCSS) is disordered. Basic and acidic residues predominate over residues 312–323 (KSEDLEVVRCSS).

The protein belongs to the G-protein coupled receptor 1 family. Mas subfamily. In terms of tissue distribution, expressed strongly in newborn dorsal root ganglia, adult dorsal root ganglia and trigeminal ganlia.

The protein resides in the membrane. Functionally, orphan receptor. Probably involved in the function of nociceptive neurons. May regulate nociceptor function and/or development, including the sensation or modulation of pain. The polypeptide is Mas-related G-protein coupled receptor member B4 (Mrgprb4) (Rattus norvegicus (Rat)).